The sequence spans 486 residues: Mitogen-activated protein kinase 17 (486 aa).

A Protein kinase domain is found at 16 to 307 (YQIQEVVGKG…AEEALADPYF (292 aa)). ATP is bound by residues 22-30 (VGKGSYGVV) and lysine 45. Aspartate 142 (proton acceptor) is an active-site residue. Threonine 178 is modified (phosphothreonine). The TXY motif lies at 178–180 (TDY). Residue tyrosine 180 is modified to Phosphotyrosine. The residue at position 183 (threonine 183) is a Phosphothreonine. A disordered region spans residues 386–455 (EEHNDDEEEH…LSSQKASQVD (70 aa)). The span at 422–433 (SVHAQSSSASVV) shows a compositional bias: low complexity. A compositionally biased stretch (polar residues) spans 440–452 (PNTATGLSSQKAS).

The protein belongs to the protein kinase superfamily. CMGC Ser/Thr protein kinase family. MAP kinase subfamily. Dually phosphorylated on Thr-178 and Tyr-180, which activates the enzyme.

It catalyses the reaction L-seryl-[protein] + ATP = O-phospho-L-seryl-[protein] + ADP + H(+). It carries out the reaction L-threonyl-[protein] + ATP = O-phospho-L-threonyl-[protein] + ADP + H(+). Activated by threonine and tyrosine phosphorylation. The protein is Mitogen-activated protein kinase 17 (MPK17) of Arabidopsis thaliana (Mouse-ear cress).